A 107-amino-acid chain; its full sequence is UPF0060 membrane protein A1S_1909 (107 aa).

A run of 4 helical transmembrane segments spans residues 2 to 22, 28 to 48, 56 to 76, and 85 to 105; these read FGLFIITAIAEILGCYFPYLI, SAWLWLPTALSLAVFVWLLTL, IYAAYGGIYIFTALMWLRFVD, and ILGGVIVLCGAGLIILQPQGL.

Belongs to the UPF0060 family.

The protein resides in the cell inner membrane. This Acinetobacter baumannii (strain ATCC 17978 / DSM 105126 / CIP 53.77 / LMG 1025 / NCDC KC755 / 5377) protein is UPF0060 membrane protein A1S_1909.